Consider the following 419-residue polypeptide: MGEKKPEPLDFVKDFQEYLTQQTHHVNMISGSVSGDKEAEALQGAGTDGDQNGLDHPSVEVSLDENSGMLVDGFERTFDGKLKCRYCNYASKGTARLIEHIRIHTGEKPHRCHLCPFASAYERHLEAHMRSHTGEKPYKCELCSFRCSDRSNLSHHRRRKHKMVPIKGTRSSLSSKKMWGVLQKKTSNLNYSRRALINLSPPSMVVQKPDYLNDFTHEIPNIQTDSYESMAKTTPTGGLPRDPQELMVDNPLNQLSTLAGQLSSLPPENQNPASPDVVPCAEEKPFMMQQPSAQAVVSAVSASLPQSSSPASPEPRPPHGQRNYSPVAGPSSEPSAHTSTPSMGNSQPSTPAPTLPVQDPQLLHHCQHCDMYFADNILYTIHMGCHGYENPFQCNICGCKCKNKYDFACHFARGQHNQH.

Lys-5 is covalently cross-linked (Glycyl lysine isopeptide (Lys-Gly) (interchain with G-Cter in SUMO2)). 3 consecutive C2H2-type zinc fingers follow at residues 82-104 (LKCR…IRIH), 110-132 (HRCH…MRSH), and 138-161 (YKCE…RRKH). A Glycyl lysine isopeptide (Lys-Gly) (interchain with G-Cter in SUMO2) cross-link involves residue Lys-185. Polar residues predominate over residues 223–236 (QTDSYESMAKTTPT). Disordered stretches follow at residues 223-245 (QTDS…DPQE) and 288-356 (MQQP…PTLP). The span at 289-311 (QQPSAQAVVSAVSASLPQSSSPA) shows a compositional bias: low complexity. The segment covering 332–349 (SEPSAHTSTPSMGNSQPS) has biased composition (polar residues). C2H2-type zinc fingers lie at residues 364–386 (HHCQ…MGCH) and 392–416 (FQCN…RGQH).

The protein belongs to the Ikaros C2H2-type zinc-finger protein family. As to quaternary structure, self-associates. Interacts with other family members; IKZF1, IKZF2, IKZF3 and IKZF4.

The protein resides in the nucleus. In terms of biological role, transcriptional repressor that binds the core 5'GNNTGTNG-3' DNA consensus sequence. Involved in megakaryocyte differentiation. In Bos taurus (Bovine), this protein is Zinc finger protein Pegasus (IKZF5).